We begin with the raw amino-acid sequence, 388 residues long: S-adenosylmethionine synthase 1 (388 aa).

E11 is a binding site for Mg(2+). H17 is a binding site for ATP. A K(+)-binding site is contributed by E45. L-methionine-binding residues include E58 and Q101. ATP-binding positions include 168–170, 233–236, D244, 250–251, A267, K271, and K275; these read DAK, SGRF, and RK. L-methionine is bound at residue D244. K275 serves as a coordination point for L-methionine.

This sequence belongs to the AdoMet synthase family. In terms of assembly, homotetramer. Mn(2+) serves as cofactor. Requires Mg(2+) as cofactor. The cofactor is Co(2+). It depends on K(+) as a cofactor. Mostly in Roots.

The protein localises to the cytoplasm. The enzyme catalyses L-methionine + ATP + H2O = S-adenosyl-L-methionine + phosphate + diphosphate. The protein operates within amino-acid biosynthesis; S-adenosyl-L-methionine biosynthesis; S-adenosyl-L-methionine from L-methionine: step 1/1. Catalyzes the formation of S-adenosylmethionine from methionine and ATP. The reaction comprises two steps that are both catalyzed by the same enzyme: formation of S-adenosylmethionine (AdoMet) and triphosphate, and subsequent hydrolysis of the triphosphate. The polypeptide is S-adenosylmethionine synthase 1 (SAMS1) (Pinus contorta (Shore pine)).